The primary structure comprises 300 residues: MSNCKYAGKIKEFIPKLTPTLHKGQCGRIGIIGGSAEYTGAPYFAAISALKLGADLVYVFCCKEAGPVIKSYSPELIVLPILDSGNVTEKIENWLTRLHALVIGPGLGTKPVNIIRLCNERSKLSVLPLIIDADGLRIVNDNLDLIKKYHGPVILTPNEVEFKRLSSKFSNTEAINVASSLNSVLIQKGSTDVITNGINFDEFDFTFDDVTITCETFGSNRRCGGQGDILSGCIATFVAWFELFKSNNTFIIPLSSVSCYGACAVTKTCSKLAFQKFGRSMTASDMIGCIHQSFTSLFGS.

One can recognise a YjeF C-terminal domain in the interval 6-297; it reads YAGKIKEFIP…GCIHQSFTSL (292 aa). (6S)-NADPHX contacts are provided by residues G106 and 158-164; that span reads NEVEFKR. ATP-binding positions include 188–192 and 218–227; these read KGSTD and GSNRRCGGQG. D228 contributes to the (6S)-NADPHX binding site.

This sequence belongs to the NnrD/CARKD family. Mg(2+) is required as a cofactor.

It carries out the reaction (6S)-NADHX + ATP = ADP + phosphate + NADH + H(+). The catalysed reaction is (6S)-NADPHX + ATP = ADP + phosphate + NADPH + H(+). Its function is as follows. Catalyzes the dehydration of the S-form of NAD(P)HX at the expense of ATP, which is converted to ADP. Together with NAD(P)HX epimerase, which catalyzes the epimerization of the S- and R-forms, the enzyme allows the repair of both epimers of NAD(P)HX, a damaged form of NAD(P)H that is a result of enzymatic or heat-dependent hydration. The chain is ATP-dependent (S)-NAD(P)H-hydrate dehydratase from Pediculus humanus subsp. corporis (Body louse).